The following is a 379-amino-acid chain: Probable G-protein coupled receptor No18 (379 aa).

Over 5-36 (EASITGRTAPELNASAAPLDDERELGETVAAT) the chain is Extracellular. An N-linked (GlcNAc...) asparagine glycan is attached at Asn-17. A helical transmembrane segment spans residues 37-58 (ALLLAIILVTIVGNSLVIISVF). Topologically, residues 59-68 (TYRPLRSVQN) are cytoplasmic. Residues 69-90 (FFVVSLAVADLTVALFVLPLNV) traverse the membrane as a helical segment. The Extracellular segment spans residues 91-107 (AYRLLNQWLLGSYLCQM). A disulfide bond links Cys-105 and Cys-184. The chain crosses the membrane as a helical span at residues 108 to 128 (WLTCDILCCTSSILNLCVIAL). At 129–148 (DRYWAITDPINYAQKRTIRR) the chain is on the cytoplasmic side. A helical transmembrane segment spans residues 149–171 (VNTMIAAVWALSLVISVPPLLGW). The Extracellular portion of the chain corresponds to 172–196 (NDWPAQFTEDTPCTLTQERLFVVYS). The helical transmembrane segment at 197-218 (SSGSFFIPLIIMSVVYAKIFFA) threads the bilayer. The Cytoplasmic segment spans residues 219-303 (TKRRLRERTR…LSKERKAARV (85 aa)). Residues 234–276 (AVPAPPQRTSSRPLAELESVASQEDETEPSPEPEPLSSRADKP) form a disordered region. The chain crosses the membrane as a helical span at residues 304-325 (LGVIMGVFVVCWLPFFLMYAIV). At 326–340 (PFCTNCAPPSQRVVD) the chain is on the extracellular side. The chain crosses the membrane as a helical span at residues 341-362 (FVTWLGYVNSSLNPIIYTIYNK). The Cytoplasmic portion of the chain corresponds to 363-375 (DFRTAFSRLLRCD).

It belongs to the G-protein coupled receptor 1 family.

The protein resides in the cell membrane. In terms of biological role, probable G-protein coupled receptor for an amine. This chain is Probable G-protein coupled receptor No18, found in Amphibalanus amphitrite (Striped barnacle).